The chain runs to 263 residues: (E)-2-((N-methylformamido)methylene)succinate hydrolase (263 aa).

Ser96 serves as the catalytic Nucleophile. Catalysis depends on residues Asn120 and His241.

Belongs to the AB hydrolase superfamily. Monomer.

It carries out the reaction (E)-2-((N-methylformamido) methylene)succinate + 2 H2O + H(+) = succinate semialdehyde + methylamine + formate + CO2. Involved in the degradation of the pyridine ring of trigonelline (TG; N-methylnicotinate) into succinate and methylamine as carbon and nitrogen sources, respectively. Catalyzes the hydrolysis of (E)-2-((N-methylformamido)methylene)succinate (MFMS) into formic acid, succinate semialdehyde (SSA), methylamine and carbon dioxide. The chain is (E)-2-((N-methylformamido)methylene)succinate hydrolase from Acinetobacter baylyi (strain ATCC 33305 / BD413 / ADP1).